The chain runs to 272 residues: Glutamate racemase (272 aa).

Substrate contacts are provided by residues 9 to 10 (DS) and 41 to 42 (YG). The active-site Proton donor/acceptor is C73. 74-75 (NT) lines the substrate pocket. Catalysis depends on C183, which acts as the Proton donor/acceptor. 184-185 (TH) serves as a coordination point for substrate.

It belongs to the aspartate/glutamate racemases family.

The enzyme catalyses L-glutamate = D-glutamate. It participates in cell wall biogenesis; peptidoglycan biosynthesis. In terms of biological role, provides the (R)-glutamate required for cell wall biosynthesis. The protein is Glutamate racemase of Shewanella sp. (strain MR-7).